Reading from the N-terminus, the 257-residue chain is Phosphate import ATP-binding protein PstB (257 aa).

The 242-residue stretch at 11-252 (IQVRDLNFYY…PAKKQTEDYI (242 aa)) folds into the ABC transporter domain. An ATP-binding site is contributed by 43 to 50 (GPSGCGKS).

It belongs to the ABC transporter superfamily. Phosphate importer (TC 3.A.1.7) family. In terms of assembly, the complex is composed of two ATP-binding proteins (PstB), two transmembrane proteins (PstC and PstA) and a solute-binding protein (PstS).

The protein resides in the cell inner membrane. It catalyses the reaction phosphate(out) + ATP + H2O = ADP + 2 phosphate(in) + H(+). Functionally, part of the ABC transporter complex PstSACB involved in phosphate import. Responsible for energy coupling to the transport system. The sequence is that of Phosphate import ATP-binding protein PstB from Enterobacter cloacae.